The primary structure comprises 304 residues: Dermonecrotic toxin LlSicTox-betaIA1 (304 aa).

The signal sequence occupies residues 1–21 (MLLSAVISFIGFAAFLQEANG). Residues 22–26 (HVVER) constitute a propeptide that is removed on maturation. Residue His38 is part of the active site. Positions 58 and 60 each coordinate Mg(2+). Catalysis depends on His74, which acts as the Nucleophile. Cystine bridges form between Cys78/Cys84 and Cys80/Cys223. Asp118 serves as a coordination point for Mg(2+).

Belongs to the arthropod phospholipase D family. Class II subfamily. Class IIb sub-subfamily. Mg(2+) is required as a cofactor. As to expression, expressed by the venom gland.

It localises to the secreted. The catalysed reaction is an N-(acyl)-sphingosylphosphocholine = an N-(acyl)-sphingosyl-1,3-cyclic phosphate + choline. It catalyses the reaction an N-(acyl)-sphingosylphosphoethanolamine = an N-(acyl)-sphingosyl-1,3-cyclic phosphate + ethanolamine. The enzyme catalyses a 1-acyl-sn-glycero-3-phosphocholine = a 1-acyl-sn-glycero-2,3-cyclic phosphate + choline. It carries out the reaction a 1-acyl-sn-glycero-3-phosphoethanolamine = a 1-acyl-sn-glycero-2,3-cyclic phosphate + ethanolamine. Functionally, dermonecrotic toxins cleave the phosphodiester linkage between the phosphate and headgroup of certain phospholipids (sphingolipid and lysolipid substrates), forming an alcohol (often choline) and a cyclic phosphate. This toxin acts on sphingomyelin (SM) with low activity. It may also act on ceramide phosphoethanolamine (CPE), lysophosphatidylcholine (LPC) and lysophosphatidylethanolamine (LPE), but not on lysophosphatidylserine (LPS), and lysophosphatidylglycerol (LPG). It acts by transphosphatidylation, releasing exclusively cyclic phosphate products as second products. Induces hemolysis, dermonecrosis, and edema. Also induces platelet aggregation. The protein is Dermonecrotic toxin LlSicTox-betaIA1 of Loxosceles laeta (South American recluse spider).